The following is a 94-amino-acid chain: Cell division topological specificity factor (94 aa).

It belongs to the MinE family.

Prevents the cell division inhibition by proteins MinC and MinD at internal division sites while permitting inhibition at polar sites. This ensures cell division at the proper site by restricting the formation of a division septum at the midpoint of the long axis of the cell. The polypeptide is Cell division topological specificity factor (Beijerinckia indica subsp. indica (strain ATCC 9039 / DSM 1715 / NCIMB 8712)).